We begin with the raw amino-acid sequence, 369 residues long: Small ribosomal subunit biogenesis GTPase RsgA (369 aa).

The CP-type G domain maps to 116-271; sequence GEQLIAANLD…LIDNPGIREI (156 aa). GTP-binding positions include 161 to 164 and 213 to 221; these read NKID and GSSGVGKST. Positions 294, 299, 301, and 307 each coordinate Zn(2+).

The protein belongs to the TRAFAC class YlqF/YawG GTPase family. RsgA subfamily. As to quaternary structure, monomer. Associates with 30S ribosomal subunit, binds 16S rRNA. Zn(2+) serves as cofactor.

The protein resides in the cytoplasm. One of several proteins that assist in the late maturation steps of the functional core of the 30S ribosomal subunit. Helps release RbfA from mature subunits. May play a role in the assembly of ribosomal proteins into the subunit. Circularly permuted GTPase that catalyzes slow GTP hydrolysis, GTPase activity is stimulated by the 30S ribosomal subunit. This is Small ribosomal subunit biogenesis GTPase RsgA from Methanosarcina acetivorans (strain ATCC 35395 / DSM 2834 / JCM 12185 / C2A).